The following is a 251-amino-acid chain: Triosephosphate isomerase (251 aa).

9–11 contacts substrate; sequence NWK. His95 functions as the Electrophile in the catalytic mechanism. Glu167 (proton acceptor) is an active-site residue. Residues Gly173, Ser213, and 234–235 contribute to the substrate site; that span reads GG. The residue at position 213 (Ser213) is a Phosphoserine.

Belongs to the triosephosphate isomerase family. As to quaternary structure, homodimer.

Its subcellular location is the cytoplasm. The enzyme catalyses D-glyceraldehyde 3-phosphate = dihydroxyacetone phosphate. Its pathway is carbohydrate biosynthesis; gluconeogenesis. The protein operates within carbohydrate degradation; glycolysis; D-glyceraldehyde 3-phosphate from glycerone phosphate: step 1/1. Involved in the gluconeogenesis. Catalyzes stereospecifically the conversion of dihydroxyacetone phosphate (DHAP) to D-glyceraldehyde-3-phosphate (G3P). This chain is Triosephosphate isomerase, found in Halalkalibacterium halodurans (strain ATCC BAA-125 / DSM 18197 / FERM 7344 / JCM 9153 / C-125) (Bacillus halodurans).